The primary structure comprises 161 residues: Afimbrial adhesin AFA-I (161 aa).

Positions 1–21 (MKKLAIIGATSVMMMTGTAQA) are cleaved as a signal peptide.

Belongs to the Dr-adhesin family.

The protein resides in the fimbrium. Hemagglutinins of uropathogenic E.coli mediate adherence to the upper urinary tract. These adhesins bind to the Dr blood group antigen and also agglutinate human erythrocytes in the presence of D-mannose (mannose-resistant hemagglutination (MRHA)). The protein is Afimbrial adhesin AFA-I (afaE1) of Escherichia coli.